The chain runs to 2531 residues: Probable polyketide synthase 26 (2531 aa).

A Ketosynthase family 3 (KS3) domain is found at 10 to 433 (QEDIAIIGFR…GSNCCLVLTE (424 aa)). Residues C174, H316, and H356 each act as for beta-ketoacyl synthase activity in the active site. The segment at 620-653 (GINPSFIVGHSLGELPMAFCSGMIDFDTVCYLLY) is acyl/malonyl transferase. Residue S630 is the For acyl/malonyl transferase activity of the active site. An N-terminal hotdog fold region spans residues 915-1036 (MDTLGFSNEK…ANYHLSHRDD (122 aa)). A PKS/mFAS DH domain is found at 915 to 1206 (MDTLGFSNEK…LKSLIPLKDP (292 aa)). H948 functions as the Proton acceptor; for dehydratase activity in the catalytic mechanism. The tract at residues 1055-1206 (NLTKLSKNQF…LKSLIPLKDP (152 aa)) is C-terminal hotdog fold. The Proton donor; for dehydratase activity role is filled by D1117. A Carrier domain is found at 2431–2509 (ASENPVKDLL…DNIKILTDSY (79 aa)). S2468 bears the O-(pantetheine 4'-phosphoryl)serine mark.

The cofactor is pantetheine 4'-phosphate.

Its function is as follows. Probable polyketide synthase. The protein is Probable polyketide synthase 26 (pks26) of Dictyostelium discoideum (Social amoeba).